We begin with the raw amino-acid sequence, 156 residues long: Putative HTH-type transcriptional regulator YffB (156 aa).

Residues lysine 2–aspartate 137 enclose the HTH rrf2-type domain.

This chain is Putative HTH-type transcriptional regulator YffB (yffB), found in Lactococcus lactis subsp. lactis (strain IL1403) (Streptococcus lactis).